The sequence spans 79 residues: Conotoxin VnMKLT1-01122 (79 aa).

The N-terminal stretch at 1–22 (MKLTCMKIVAVLFLTAWTFVTA) is a signal peptide. A propeptide spanning residues 23 to 48 (DDSRNGLEYLFPKAHYEMNPEASKLN) is cleaved from the precursor. Pyrrolidone carboxylic acid is present on Q51. Intrachain disulfides connect C53–C70, C60–C74, and C69–C78.

It belongs to the conotoxin O1 superfamily. As to expression, expressed by the venom duct.

The protein resides in the secreted. The protein is Conotoxin VnMKLT1-01122 of Conus ventricosus (Mediterranean cone).